The primary structure comprises 301 residues: rRNA methyltransferase 1, mitochondrial (301 aa).

A mitochondrion-targeting transit peptide spans 1–11 (MIRSRVNLARE). Positions 121–141 (YNNKNGQDSPHNDLNEGKSSS) are disordered.

It belongs to the class IV-like SAM-binding methyltransferase superfamily. RNA methyltransferase TrmH family.

The protein resides in the mitochondrion. The enzyme catalyses a guanosine in 21S rRNA + S-adenosyl-L-methionine = a 2'-O-methylguanosine in 21S rRNA + S-adenosyl-L-homocysteine + H(+). In terms of biological role, S-adenosyl-L-methionine-dependent 2'-O-ribose methyltransferase that catalyzes the formation of the 2'-O-methylguanosine corresponding to position 2270 in S.cerevisiae 21S mitochondrial large subunit ribosomal RNA (mtLSU rRNA), a universally conserved modification in the peptidyl transferase domain of the mtLSU rRNA. In Schizosaccharomyces pombe (strain 972 / ATCC 24843) (Fission yeast), this protein is rRNA methyltransferase 1, mitochondrial.